Here is a 385-residue protein sequence, read N- to C-terminus: Protein hunchback (385 aa).

2 disordered regions span residues 1–94 (IGGI…YDAM) and 124–216 (ESRA…PGLR). Low complexity predominate over residues 63-77 (SASPSSSSKDSNGHS). 2 stretches are compositionally biased toward basic and acidic residues: residues 126 to 135 (RASDARDHSP) and 173 to 203 (PERR…REGS). 4 consecutive C2H2-type zinc fingers follow at residues 229–251 (FKCK…SKEH), 258–280 (LCCR…MRNH), 286–308 (FQCS…LKSH), and 314–338 (YRCA…KYQH). Residues 361 to 385 (TRRGPKQKPLSKIFEQQTGTNNHSP) are disordered. Residues 374–385 (FEQQTGTNNHSP) show a composition bias toward polar residues.

It belongs to the hunchback C2H2-type zinc-finger protein family.

It is found in the nucleus. In terms of biological role, gap class segmentation protein that controls development of head structures. This chain is Protein hunchback (hb), found in Bombyx mori (Silk moth).